The following is a 364-amino-acid chain: UDP-N-acetylglucosamine--N-acetylmuramyl-(pentapeptide) pyrophosphoryl-undecaprenol N-acetylglucosamine transferase (364 aa).

UDP-N-acetyl-alpha-D-glucosamine is bound by residues 10 to 12, asparagine 128, arginine 170, serine 199, isoleucine 250, and glutamine 295; that span reads TGG.

It belongs to the glycosyltransferase 28 family. MurG subfamily.

It localises to the cell inner membrane. The catalysed reaction is di-trans,octa-cis-undecaprenyl diphospho-N-acetyl-alpha-D-muramoyl-L-alanyl-D-glutamyl-meso-2,6-diaminopimeloyl-D-alanyl-D-alanine + UDP-N-acetyl-alpha-D-glucosamine = di-trans,octa-cis-undecaprenyl diphospho-[N-acetyl-alpha-D-glucosaminyl-(1-&gt;4)]-N-acetyl-alpha-D-muramoyl-L-alanyl-D-glutamyl-meso-2,6-diaminopimeloyl-D-alanyl-D-alanine + UDP + H(+). The protein operates within cell wall biogenesis; peptidoglycan biosynthesis. Cell wall formation. Catalyzes the transfer of a GlcNAc subunit on undecaprenyl-pyrophosphoryl-MurNAc-pentapeptide (lipid intermediate I) to form undecaprenyl-pyrophosphoryl-MurNAc-(pentapeptide)GlcNAc (lipid intermediate II). The sequence is that of UDP-N-acetylglucosamine--N-acetylmuramyl-(pentapeptide) pyrophosphoryl-undecaprenol N-acetylglucosamine transferase from Chlorobaculum tepidum (strain ATCC 49652 / DSM 12025 / NBRC 103806 / TLS) (Chlorobium tepidum).